The chain runs to 152 residues: tRNA-specific adenosine deaminase (152 aa).

One can recognise a CMP/dCMP-type deaminase domain in the interval 2-111; sequence AERTHFMELA…AQDPKGGAVE (110 aa). Residue His53 participates in Zn(2+) binding. Catalysis depends on Glu55, which acts as the Proton donor. Positions 83 and 86 each coordinate Zn(2+).

The protein belongs to the cytidine and deoxycytidylate deaminase family. Homodimer. Requires Zn(2+) as cofactor.

The catalysed reaction is adenosine(34) in tRNA + H2O + H(+) = inosine(34) in tRNA + NH4(+). Its function is as follows. Catalyzes the deamination of adenosine to inosine at the wobble position 34 of tRNA(Arg2). The chain is tRNA-specific adenosine deaminase from Agrobacterium fabrum (strain C58 / ATCC 33970) (Agrobacterium tumefaciens (strain C58)).